Here is a 495-residue protein sequence, read N- to C-terminus: Putative aldehyde dehydrogenase AldA (495 aa).

212–218 serves as a coordination point for NAD(+); it reads GKGSESG. Catalysis depends on residues glutamate 256 and cysteine 290.

This sequence belongs to the aldehyde dehydrogenase family.

It catalyses the reaction an aldehyde + NAD(+) + H2O = a carboxylate + NADH + 2 H(+). In Staphylococcus aureus (strain Mu50 / ATCC 700699), this protein is Putative aldehyde dehydrogenase AldA (aldA).